Reading from the N-terminus, the 154-residue chain is SsrA-binding protein (154 aa).

Positions 130–154 (KLHDKRETERRRQDQRDIQRAIKRA) are disordered. Residues 133–154 (DKRETERRRQDQRDIQRAIKRA) show a composition bias toward basic and acidic residues.

This sequence belongs to the SmpB family.

It is found in the cytoplasm. In terms of biological role, required for rescue of stalled ribosomes mediated by trans-translation. Binds to transfer-messenger RNA (tmRNA), required for stable association of tmRNA with ribosomes. tmRNA and SmpB together mimic tRNA shape, replacing the anticodon stem-loop with SmpB. tmRNA is encoded by the ssrA gene; the 2 termini fold to resemble tRNA(Ala) and it encodes a 'tag peptide', a short internal open reading frame. During trans-translation Ala-aminoacylated tmRNA acts like a tRNA, entering the A-site of stalled ribosomes, displacing the stalled mRNA. The ribosome then switches to translate the ORF on the tmRNA; the nascent peptide is terminated with the 'tag peptide' encoded by the tmRNA and targeted for degradation. The ribosome is freed to recommence translation, which seems to be the essential function of trans-translation. The protein is SsrA-binding protein of Synechococcus elongatus (strain ATCC 33912 / PCC 7942 / FACHB-805) (Anacystis nidulans R2).